The sequence spans 132 residues: Lectin OAA (132 aa).

Repeat copies occupy residues alanine 1–glycine 66 and asparagine 67–leucine 132. The tract at residues alanine 1 to leucine 132 is 2 X approximate tandem repeats.

As to quaternary structure, monomer.

Lectin specific for high mannose N-glycans, recognizes the branched moiety of these glycans. Does not recognize other types of N-glycans or monosaccharides. Agglutinates trypsin-treated rabbit erythrocytes. Does not require divalent cations for activity. Inhibits HIV replication in MT4 cells with an EC(50) of 45 nM. Binds to the HIV envelope glycoprotein gp120. The sequence is that of Lectin OAA from Planktothrix agardhii (Oscillatoria agardhii).